A 310-amino-acid chain; its full sequence is Terpene synthase 6 (310 aa).

The short motif at 93–98 (DDFYFE) is the DDxx(x)D/E motif element. The NDxxSxxxD/E motif motif lies at 222–230 (NDCYSFNKE).

This sequence belongs to the terpene synthase family.

It catalyses the reaction (2E,6E)-farnesyl diphosphate = (E)-beta-farnesene + diphosphate. The enzyme catalyses (2E,6E)-farnesyl diphosphate = (1S,2S,4R)-beta-elemene + diphosphate. It carries out the reaction (2E,6E)-farnesyl diphosphate = (3E,6E)-alpha-farnesene + diphosphate. Its function is as follows. Terpene synthase that converts its substrate farnesyl diphosphate (FPP) into the sesquiterpenes beta-elemene, (E)-beta-farnesene and (E,E)-alpha-farnesene. The chain is Terpene synthase 6 from Dictyostelium purpureum (Slime mold).